The primary structure comprises 123 residues: MPTISQLVKKGREKVEKKTKSPALQSCPQKRGVCVRVYTTTPKKPNSALRKVAKVRLTNGVEVIAYIPGEGHNLQEHSIVLVRGGRVKDLPGVRYHIVRGTLDCAGVNNRRQSRSKYGTKRPK.

Positions methionine 1–alanine 23 are disordered. 3-methylthioaspartic acid is present on aspartate 89.

The protein belongs to the universal ribosomal protein uS12 family. Part of the 30S ribosomal subunit. Contacts proteins S8 and S17. May interact with IF1 in the 30S initiation complex.

Functionally, with S4 and S5 plays an important role in translational accuracy. Interacts with and stabilizes bases of the 16S rRNA that are involved in tRNA selection in the A site and with the mRNA backbone. Located at the interface of the 30S and 50S subunits, it traverses the body of the 30S subunit contacting proteins on the other side and probably holding the rRNA structure together. The combined cluster of proteins S8, S12 and S17 appears to hold together the shoulder and platform of the 30S subunit. In Thermodesulfovibrio yellowstonii (strain ATCC 51303 / DSM 11347 / YP87), this protein is Small ribosomal subunit protein uS12.